The chain runs to 480 residues: Ribosomal RNA small subunit methyltransferase F (480 aa).

S-adenosyl-L-methionine-binding positions include 125 to 131, E149, D176, and D194; that span reads AAAPGSK. C247 acts as the Nucleophile in catalysis.

It belongs to the class I-like SAM-binding methyltransferase superfamily. RsmB/NOP family.

Its subcellular location is the cytoplasm. It catalyses the reaction cytidine(1407) in 16S rRNA + S-adenosyl-L-methionine = 5-methylcytidine(1407) in 16S rRNA + S-adenosyl-L-homocysteine + H(+). Its function is as follows. Specifically methylates the cytosine at position 1407 (m5C1407) of 16S rRNA. This chain is Ribosomal RNA small subunit methyltransferase F, found in Enterobacter sp. (strain 638).